The primary structure comprises 444 residues: 23S rRNA (uracil(1939)-C(5))-methyltransferase RlmD (444 aa).

The region spanning 5–67 is the TRAM domain; it reads RSRIDRTPFQ…RHFDEARTVE (63 aa). 4 residues coordinate [4Fe-4S] cluster: cysteine 80, cysteine 86, cysteine 89, and cysteine 168. The S-adenosyl-L-methionine site is built by glutamine 276, phenylalanine 305, asparagine 310, glutamate 326, aspartate 353, and aspartate 374. Cysteine 400 functions as the Nucleophile in the catalytic mechanism.

Belongs to the class I-like SAM-binding methyltransferase superfamily. RNA M5U methyltransferase family. RlmD subfamily.

The enzyme catalyses uridine(1939) in 23S rRNA + S-adenosyl-L-methionine = 5-methyluridine(1939) in 23S rRNA + S-adenosyl-L-homocysteine + H(+). Functionally, catalyzes the formation of 5-methyl-uridine at position 1939 (m5U1939) in 23S rRNA. The protein is 23S rRNA (uracil(1939)-C(5))-methyltransferase RlmD of Stenotrophomonas maltophilia (strain R551-3).